Here is a 337-residue protein sequence, read N- to C-terminus: Anthranilate phosphoribosyltransferase (337 aa).

5-phospho-alpha-D-ribose 1-diphosphate contacts are provided by residues Gly81, 84-85, Ser89, 91-94, 109-117, and Ala121; these read GD, NVST, and KHGNRAASS. An anthranilate-binding site is contributed by Gly81. Residue Ser93 participates in Mg(2+) binding. Asn112 is a binding site for anthranilate. Arg167 contributes to the anthranilate binding site. The Mg(2+) site is built by Asp226 and Glu227.

The protein belongs to the anthranilate phosphoribosyltransferase family. In terms of assembly, homodimer. Mg(2+) is required as a cofactor.

It catalyses the reaction N-(5-phospho-beta-D-ribosyl)anthranilate + diphosphate = 5-phospho-alpha-D-ribose 1-diphosphate + anthranilate. Its pathway is amino-acid biosynthesis; L-tryptophan biosynthesis; L-tryptophan from chorismate: step 2/5. Its function is as follows. Catalyzes the transfer of the phosphoribosyl group of 5-phosphorylribose-1-pyrophosphate (PRPP) to anthranilate to yield N-(5'-phosphoribosyl)-anthranilate (PRA). This chain is Anthranilate phosphoribosyltransferase, found in Methylobacterium nodulans (strain LMG 21967 / CNCM I-2342 / ORS 2060).